A 417-amino-acid chain; its full sequence is Voltage-gated ClC-type chloride channel ClcB (417 aa).

10 helical membrane-spanning segments follow: residues 5 to 25 (LLIA…FRHA), 54 to 74 (LITP…WQKM), 146 to 166 (LWIA…PLAG), 168 to 188 (LFIA…PVVV), 222 to 242 (VMIV…MWLM), 258 to 278 (WQLA…PTVW), 288 to 308 (FLLS…KILA), 316 to 336 (GAPG…GMFL), 349 to 371 (EIAI…HAPI), and 380 to 400 (MTGE…ASVL).

It belongs to the chloride channel (TC 2.A.49) family. ClcB subfamily.

The protein localises to the cell inner membrane. Probably acts as an electrical shunt for an outwardly-directed proton pump that is linked to amino acid decarboxylation, as part of the extreme acid resistance (XAR) response. This chain is Voltage-gated ClC-type chloride channel ClcB, found in Salmonella dublin (strain CT_02021853).